Consider the following 445-residue polypeptide: tRNA(Ile)-lysidine synthase (445 aa).

Position 30-35 (30-35 (SGGLDS)) interacts with ATP.

The protein belongs to the tRNA(Ile)-lysidine synthase family.

It is found in the cytoplasm. The catalysed reaction is cytidine(34) in tRNA(Ile2) + L-lysine + ATP = lysidine(34) in tRNA(Ile2) + AMP + diphosphate + H(+). Functionally, ligates lysine onto the cytidine present at position 34 of the AUA codon-specific tRNA(Ile) that contains the anticodon CAU, in an ATP-dependent manner. Cytidine is converted to lysidine, thus changing the amino acid specificity of the tRNA from methionine to isoleucine. This is tRNA(Ile)-lysidine synthase from Alkalilimnicola ehrlichii (strain ATCC BAA-1101 / DSM 17681 / MLHE-1).